The chain runs to 146 residues: MIQKINILDSSQSGVKNGADSEAVLAALIEHLELINPSGRLSQNTRSAMLQLREEEWSEFFFWLLNSLECLDYVIINLTPESKKTLMSEHRNNIQVAIDALYSQRRRKSPGDESETLTRRNDAIFGNHVWQTFAQYFPPGLEKPSV.

This is an uncharacterized protein from Escherichia coli (strain K12).